Consider the following 217-residue polypeptide: Pyrophosphatase PpaX (217 aa).

D11 acts as the Nucleophile in catalysis.

Belongs to the HAD-like hydrolase superfamily. PpaX family. It depends on Mg(2+) as a cofactor.

The catalysed reaction is diphosphate + H2O = 2 phosphate + H(+). Functionally, hydrolyzes pyrophosphate formed during P-Ser-HPr dephosphorylation by HPrK/P. Might play a role in controlling the intracellular pyrophosphate pool. This Listeria innocua serovar 6a (strain ATCC BAA-680 / CLIP 11262) protein is Pyrophosphatase PpaX.